The chain runs to 425 residues: Enolase (425 aa).

Q162 contacts (2R)-2-phosphoglycerate. The Proton donor role is filled by E204. D241, E282, and D309 together coordinate Mg(2+). Positions 334, 363, 364, and 385 each coordinate (2R)-2-phosphoglycerate. K334 serves as the catalytic Proton acceptor.

The protein belongs to the enolase family. The cofactor is Mg(2+).

Its subcellular location is the cytoplasm. The protein resides in the secreted. The protein localises to the cell surface. It catalyses the reaction (2R)-2-phosphoglycerate = phosphoenolpyruvate + H2O. Its pathway is carbohydrate degradation; glycolysis; pyruvate from D-glyceraldehyde 3-phosphate: step 4/5. Catalyzes the reversible conversion of 2-phosphoglycerate (2-PG) into phosphoenolpyruvate (PEP). It is essential for the degradation of carbohydrates via glycolysis. The sequence is that of Enolase from Corynebacterium jeikeium (strain K411).